A 322-amino-acid polypeptide reads, in one-letter code: Acetyl-coenzyme A carboxylase carboxyl transferase subunit alpha (322 aa).

One can recognise a CoA carboxyltransferase C-terminal domain in the interval 43 to 297; sequence ALKSKSNALT…KEVLTQQLNK (255 aa).

It belongs to the AccA family. In terms of assembly, acetyl-CoA carboxylase is a heterohexamer composed of biotin carboxyl carrier protein (AccB), biotin carboxylase (AccC) and two subunits each of ACCase subunit alpha (AccA) and ACCase subunit beta (AccD).

It is found in the cytoplasm. It carries out the reaction N(6)-carboxybiotinyl-L-lysyl-[protein] + acetyl-CoA = N(6)-biotinyl-L-lysyl-[protein] + malonyl-CoA. The protein operates within lipid metabolism; malonyl-CoA biosynthesis; malonyl-CoA from acetyl-CoA: step 1/1. In terms of biological role, component of the acetyl coenzyme A carboxylase (ACC) complex. First, biotin carboxylase catalyzes the carboxylation of biotin on its carrier protein (BCCP) and then the CO(2) group is transferred by the carboxyltransferase to acetyl-CoA to form malonyl-CoA. The protein is Acetyl-coenzyme A carboxylase carboxyl transferase subunit alpha of Vesicomyosocius okutanii subsp. Calyptogena okutanii (strain HA).